Consider the following 526-residue polypeptide: Cytochrome P450 monooxygenase BOT4 (526 aa).

The N-linked (GlcNAc...) asparagine glycan is linked to Asn5. A helical transmembrane segment spans residues 41–61 (CLVAIILCRFIAVWSYNLWFH). N-linked (GlcNAc...) asparagine glycans are attached at residues Asn205 and Asn281. Cys464 is a binding site for heme.

It belongs to the cytochrome P450 family. Heme is required as a cofactor.

Its subcellular location is the membrane. It functions in the pathway secondary metabolite biosynthesis. Its function is as follows. Cytochrome P450 monooxygenase; part of the gene cluster that mediates the biosynthesis of botrydial. Botrydial is necessary for colonization of plant tissue by the T4 strain. It is a strain-dependent virulence factor since highly aggressive strains like SAS56 or B05 still retain substantial virulence when botrydial synthesis is impaired, since they produce also botcinic acid. The first step of botrydial biosynthesis is performed by the sesquiterpene synthase BOT2 which catalyzes the cyclization of farnesyl diphosphate (FPP) to presilphiperfolan-8-beta-ol (PSP). The cytochrome P450 monooxygenase BOT4 then catalyzes the hydroxylation at C-4 to give a probotryane intermediate. Acetylation of the hydroxyl at C-4 is carried out by the acetyltransferase BOT5, followed by the combined action of the P450 monooxygenases BOT3 and BOT1, to yield finally the glycol, via the regio- and stereospecific hydroxylations at C-10 and C-15 of the probotryane intermediates, respectively. The cleavage of the C10-C15 bond of probotryane skeleton is an intriguing and chemically important reaction, which could be mediated by some of the monooxygenases or by a combination of them. It is possible that either BOT3 or BOT1 would oxidize either the 10- or the 15-hydroxy group to the hydroperoxide derivative, which would then undergo heterolytic fragmentation to give the dialdehyde botrydial. Finally, the dehydrogenase BOT7 might be involved in the conversion of botrydial to dihydrobotrydial. The sequence is that of Cytochrome P450 monooxygenase BOT4 from Botryotinia fuckeliana (Noble rot fungus).